The chain runs to 216 residues: 4-hydroxy-tetrahydrodipicolinate reductase (216 aa).

NAD(+)-binding positions include 9 to 12 (SGRM), 71 to 73 (GTT), and 95 to 98 (AYNF). His-127 acts as the Proton donor/acceptor in catalysis. Residue His-128 coordinates (S)-2,3,4,5-tetrahydrodipicolinate. Lys-131 provides a ligand contact to NAD(+). The active-site Proton donor is the Lys-131. 137 to 138 (GT) lines the (S)-2,3,4,5-tetrahydrodipicolinate pocket.

This sequence belongs to the DapB family. As to quaternary structure, homotetramer.

It is found in the cytoplasm. It carries out the reaction (S)-2,3,4,5-tetrahydrodipicolinate + NAD(+) + H2O = (2S,4S)-4-hydroxy-2,3,4,5-tetrahydrodipicolinate + NADH + H(+). It catalyses the reaction (S)-2,3,4,5-tetrahydrodipicolinate + NADP(+) + H2O = (2S,4S)-4-hydroxy-2,3,4,5-tetrahydrodipicolinate + NADPH + H(+). Its pathway is amino-acid biosynthesis; L-lysine biosynthesis via DAP pathway; (S)-tetrahydrodipicolinate from L-aspartate: step 4/4. Is inhibited by high concentrations of NADH. In terms of biological role, catalyzes the conversion of 4-hydroxy-tetrahydrodipicolinate (HTPA) to tetrahydrodipicolinate. Uses NADPH as a reductant with much more efficiency than NADH. In Thermotoga maritima (strain ATCC 43589 / DSM 3109 / JCM 10099 / NBRC 100826 / MSB8), this protein is 4-hydroxy-tetrahydrodipicolinate reductase.